A 2002-amino-acid chain; its full sequence is [F-actin]-monooxygenase MICAL3 (2002 aa).

Residues 2–494 (EERKHETMNP…RHLYDTGETK (493 aa)) form a monooxygenase domain region. FAD contacts are provided by residues Cys-97, 116 to 118 (EKR), 123 to 125 (RNN), Phe-183, Tyr-298, and Asp-398. In terms of domain architecture, Calponin-homology (CH) spans 518–624 (VARSSKLLGW…YLTQFYEMFK (107 aa)). The residue at position 649 (Ser-649) is a Phosphoserine. The disordered stretch occupies residues 658–706 (GQTISRKRSPKDKKEKDLDGAGKRRKTSQSEEEEAPRGHRGERPTLVST). Positions 663–684 (RKRSPKDKKEKDLDGAGKRRKT) match the Nuclear localization signal motif. The segment covering 669-679 (DKKEKDLDGAG) has biased composition (basic and acidic residues). Ser-685 and Ser-687 each carry phosphoserine. The LIM zinc-binding domain maps to 762-824 (DTCYFCQKRV…KPHYCYRLSG (63 aa)). Positions 764, 767, 785, 788, 791, 794, 814, and 817 each coordinate Zn(2+). The disordered stretch occupies residues 835 to 883 (PLSGKEAKGPLQDGATTDANGRANAVASSTERTPGSGVNGLEEPSIAKR). Phosphothreonine is present on Thr-887. Disordered stretches follow at residues 907-1313 (QEVP…SPLA), 1335-1776 (RRSL…GKHR), and 1791-1821 (LSFSEDSDLSSDDVLEKSSQKSRREPRTYTE). Residues 938–950 (SEMEEEGEEEEEE) are compositionally biased toward acidic residues. Residue Ser-977 is modified to Phosphoserine. Residues 991–1017 (NEEEEEEEEEYEEEEEEDYDEEEEESS) are compositionally biased toward acidic residues. Basic and acidic residues predominate over residues 1041-1054 (HWTHIREREEEERM). The segment covering 1055–1066 (APASESSASGAP) has biased composition (low complexity). The segment covering 1068 to 1102 (DENDLEEDVDSEPAEIEGEAAEDGDPGDTGAELDD) has biased composition (acidic residues). Ser-1134, Ser-1143, Ser-1160, and Ser-1192 each carry phosphoserine. Polar residues predominate over residues 1150-1163 (GPSQATSPIRSPQE). Positions 1191-1218 (KSPEERLFPEPLLPKEKPKADAPSDLKA) are enriched in basic and acidic residues. The span at 1239–1258 (PGSPQPQPPVAASTPPPSPL) shows a compositional bias: pro residues. 2 stretches are compositionally biased toward polar residues: residues 1268–1280 (TEATVPSPTQSPI) and 1288–1302 (KTSTPLAPLPVQSQS). Ser-1274 is modified (phosphoserine). Position 1276 is a phosphothreonine (Thr-1276). Ser-1278 carries the post-translational modification Phosphoserine. 2 positions are modified to phosphoserine: Ser-1310 and Ser-1337. The residue at position 1341 (Thr-1341) is a Phosphothreonine. A phosphoserine mark is found at Ser-1371 and Ser-1384. Positions 1407-1422 (PSDRELRSAQEERREL) are enriched in basic and acidic residues. Residues 1423–1435 (SSSSGLGLHGSSS) show a composition bias toward low complexity. A Phosphoserine modification is found at Ser-1433. Residues 1436–1451 (NMKTLGSQSFNTSDSA) are compositionally biased toward polar residues. Thr-1454 is modified (phosphothreonine). Over residues 1456-1467 (PSSPPPPPPPGE) the composition is skewed to pro residues. Over residues 1516-1530 (SVEEIPFADDVEDTY) the composition is skewed to acidic residues. Positions 1588–1604 (EAKELAEERMRAREKSV) are enriched in basic and acidic residues. Ser-1649 bears the Phosphoserine mark. At Thr-1651 the chain carries Phosphothreonine. Positions 1657–1668 (GSEEPTLKHEAT) are enriched in basic and acidic residues. Positions 1674-1694 (SPPSDSGGPDGSFTSSEGSSG) are enriched in low complexity. The span at 1695–1713 (KSKKRSSLFSPRRNKKEKK) shows a compositional bias: basic residues. A phosphoserine mark is found at Ser-1701 and Ser-1704. Residues 1760–1769 (CPSTPSSGAT) are compositionally biased toward polar residues. Basic and acidic residues predominate over residues 1804 to 1820 (VLEKSSQKSRREPRTYT). Residues 1821-1992 (EEELNAKLTR…EEDKDLEAAM (172 aa)) are a coiled coil. A bMERB domain is found at 1841 to 1990 (KQEELKRLHR…EREEDKDLEA (150 aa)). Ser-1912 is subject to Phosphoserine.

Belongs to the Mical family. As to quaternary structure, interacts with RAB1B, RAB8A, RAB10, RAB13 and RAB15 (in their GTP-bound forms); binding to RAB1B is of low affinity compared to other Rab proteins; at least in case of RAB8A can bind 2 molecules of RAB8A simultaneously through a high and a low affinity binding site, respectively. Interacts with ERC1 and RAB8A; may bridge ERC1 with RAB8A. Interacts with KIF23 and ERC1; enhances the interaction between KIF23 and ERC1. Interacts with NINL isoform 2. It depends on FAD as a cofactor. Ubiquitous.

It localises to the cytoplasm. It is found in the cell cortex. The protein resides in the cytoskeleton. Its subcellular location is the nucleus. The protein localises to the midbody. It localises to the spindle. It is found in the cilium basal body. The enzyme catalyses L-methionyl-[F-actin] + NADPH + O2 + H(+) = L-methionyl-(R)-S-oxide-[F-actin] + NADP(+) + H2O. Monooxygenase that promotes depolymerization of F-actin by mediating oxidation of specific methionine residues on actin to form methionine-sulfoxide, resulting in actin filament disassembly and preventing repolymerization. In the absence of actin, it also functions as a NADPH oxidase producing H(2)O(2). Seems to act as Rab effector protein and plays a role in vesicle trafficking. Involved in exocytic vesicles tethering and fusion: the monooxygenase activity is required for this process and implicates RAB8A associated with exocytotic vesicles. Required for cytokinesis. Contributes to stabilization and/or maturation of the intercellular bridge independently of its monooxygenase activity. Promotes recruitment of Rab8 and ERC1 to the intercellular bridge, and together these proteins are proposed to function in timely abscission. In Homo sapiens (Human), this protein is [F-actin]-monooxygenase MICAL3 (MICAL3).